The sequence spans 116 residues: Ribulose bisphosphate carboxylase small subunit 1 (116 aa).

The protein belongs to the RuBisCO small chain family. As to quaternary structure, heterohexadecamer of 8 large and 8 small subunits.

The protein localises to the cytoplasm. In terms of biological role, ruBisCO catalyzes two reactions: the carboxylation of D-ribulose 1,5-bisphosphate, the primary event in carbon dioxide fixation, as well as the oxidative fragmentation of the pentose substrate. Both reactions occur simultaneously and in competition at the same active site. Although the small subunit is not catalytic it is essential for maximal activity. Functionally, can replace the endogenous type I ccbS gene in H.neapolitanus, reconstituting RuBisCO with about 10% of normal activity; the active enzyme is targeted to carboxysomes. This is Ribulose bisphosphate carboxylase small subunit 1 from Hydrogenovibrio crunogenus (strain DSM 25203 / XCL-2) (Thiomicrospira crunogena).